A 386-amino-acid polypeptide reads, in one-letter code: L-arabinitol 4-dehydrogenase (386 aa).

Zn(2+) contacts are provided by Cys55, His80, Glu81, Cys110, Cys113, Cys116, Cys124, and Glu165. Residues 192 to 193 (PI), Asp213, Arg218, Ile293, and 317 to 319 (QYR) each bind NAD(+).

Belongs to the zinc-containing alcohol dehydrogenase family. Homotetramer. Zn(2+) is required as a cofactor.

The enzyme catalyses L-arabinitol + NAD(+) = L-xylulose + NADH + H(+). The protein operates within carbohydrate degradation; L-arabinose degradation via L-arabinitol; D-xylulose 5-phosphate from L-arabinose (fungal route): step 2/5. Functionally, catalyzes the NAD-dependent oxidation of L-arabinitol to L-xylulose in the fungal L-arabinose catabolic pathway. L-arabinose catabolism is important for using plant material as a carbon source. Not active with NADP as cosubstrate. This chain is L-arabinitol 4-dehydrogenase (ladA), found in Aspergillus niger (strain ATCC MYA-4892 / CBS 513.88 / FGSC A1513).